The chain runs to 350 residues: LysM domain-containing GPI-anchored protein 2 (350 aa).

The N-terminal stretch at 1 to 23 (METSCFTLLGLLVSLSFFLTLSA) is a signal peptide. 4 N-linked (GlcNAc...) asparagine glycosylation sites follow: N30, N48, N76, and N99. Intrachain disulfides connect C31-C97, C38-C161, C95-C159, and C97-C161. LysM domains lie at 108–155 (IEYT…KFWI) and 172–216 (YAHV…PLDV). Chitin contacts are provided by residues 114-120 (KDDILSF) and 142-149 (PDPNKIEI). Residues N193, N238, N258, N289, and N305 are each glycosylated (N-linked (GlcNAc...) asparagine). Cystine bridges form between C221/C253 and C248/C277. The GPI-anchor amidated aspartate moiety is linked to residue D318. A propeptide spans 319 to 350 (SAGPDNYASTLSSSFNFVIVLIQCALLCLCLL) (removed in mature form).

Forms homooligomers. Interacts with CERK1. Binds to chitin oligosaccharide elicitor.

The protein resides in the cell membrane. Chitin elicitor-binding protein involved in the perception of chitin oligosaccharide elicitor. The chain is LysM domain-containing GPI-anchored protein 2 (LYM2) from Arabidopsis thaliana (Mouse-ear cress).